Consider the following 154-residue polypeptide: Ribosome maturation factor RimP (154 aa).

It belongs to the RimP family.

It is found in the cytoplasm. In terms of biological role, required for maturation of 30S ribosomal subunits. This chain is Ribosome maturation factor RimP, found in Haemophilus ducreyi (strain 35000HP / ATCC 700724).